A 115-amino-acid chain; its full sequence is Large ribosomal subunit protein bL19 (115 aa).

Belongs to the bacterial ribosomal protein bL19 family.

In terms of biological role, this protein is located at the 30S-50S ribosomal subunit interface and may play a role in the structure and function of the aminoacyl-tRNA binding site. The protein is Large ribosomal subunit protein bL19 of Lacticaseibacillus casei (strain BL23) (Lactobacillus casei).